We begin with the raw amino-acid sequence, 476 residues long: Glycogen synthase (476 aa).

Residue K15 coordinates ADP-alpha-D-glucose.

The protein belongs to the glycosyltransferase 1 family. Bacterial/plant glycogen synthase subfamily.

The enzyme catalyses [(1-&gt;4)-alpha-D-glucosyl](n) + ADP-alpha-D-glucose = [(1-&gt;4)-alpha-D-glucosyl](n+1) + ADP + H(+). The protein operates within glycan biosynthesis; glycogen biosynthesis. In terms of biological role, synthesizes alpha-1,4-glucan chains using ADP-glucose. The polypeptide is Glycogen synthase (Lactobacillus acidophilus (strain ATCC 700396 / NCK56 / N2 / NCFM)).